The chain runs to 392 residues: Chaperone protein DnaJ 2 (392 aa).

The J domain maps to 10–75 (DFYKELGVSS…AKRKEYDETR (66 aa)). A CR-type zinc finger spans residues 161–239 (GVAMPLRLTS…CKGTGVTTRT (79 aa)). Residues cysteine 174, cysteine 177, cysteine 191, cysteine 194, cysteine 213, cysteine 216, cysteine 227, and cysteine 230 each contribute to the Zn(2+) site. CXXCXGXG motif repeat units follow at residues 174–181 (CTNCHGSG), 191–198 (CPTCNGSG), 213–220 (CTDCRGSG), and 227–234 (CDECKGTG).

The protein belongs to the DnaJ family. As to quaternary structure, homodimer. The cofactor is Zn(2+).

The protein localises to the cytoplasm. Participates actively in the response to hyperosmotic and heat shock by preventing the aggregation of stress-denatured proteins and by disaggregating proteins, also in an autonomous, DnaK-independent fashion. Unfolded proteins bind initially to DnaJ; upon interaction with the DnaJ-bound protein, DnaK hydrolyzes its bound ATP, resulting in the formation of a stable complex. GrpE releases ADP from DnaK; ATP binding to DnaK triggers the release of the substrate protein, thus completing the reaction cycle. Several rounds of ATP-dependent interactions between DnaJ, DnaK and GrpE are required for fully efficient folding. Also involved, together with DnaK and GrpE, in the DNA replication of plasmids through activation of initiation proteins. This is Chaperone protein DnaJ 2 from Mycolicibacterium paratuberculosis (strain ATCC BAA-968 / K-10) (Mycobacterium paratuberculosis).